We begin with the raw amino-acid sequence, 211 residues long: ATP phosphoribosyltransferase (211 aa).

It belongs to the ATP phosphoribosyltransferase family. Short subfamily. In terms of assembly, heteromultimer composed of HisG and HisZ subunits.

The protein localises to the cytoplasm. It carries out the reaction 1-(5-phospho-beta-D-ribosyl)-ATP + diphosphate = 5-phospho-alpha-D-ribose 1-diphosphate + ATP. It participates in amino-acid biosynthesis; L-histidine biosynthesis; L-histidine from 5-phospho-alpha-D-ribose 1-diphosphate: step 1/9. Its function is as follows. Catalyzes the condensation of ATP and 5-phosphoribose 1-diphosphate to form N'-(5'-phosphoribosyl)-ATP (PR-ATP). Has a crucial role in the pathway because the rate of histidine biosynthesis seems to be controlled primarily by regulation of HisG enzymatic activity. The sequence is that of ATP phosphoribosyltransferase from Sorangium cellulosum (strain So ce56) (Polyangium cellulosum (strain So ce56)).